A 293-amino-acid polypeptide reads, in one-letter code: Elongation factor Ts (293 aa).

The involved in Mg(2+) ion dislocation from EF-Tu stretch occupies residues 80–83 (TDFV).

The protein belongs to the EF-Ts family.

The protein resides in the cytoplasm. Its function is as follows. Associates with the EF-Tu.GDP complex and induces the exchange of GDP to GTP. It remains bound to the aminoacyl-tRNA.EF-Tu.GTP complex up to the GTP hydrolysis stage on the ribosome. The protein is Elongation factor Ts of Burkholderia vietnamiensis (strain G4 / LMG 22486) (Burkholderia cepacia (strain R1808)).